The following is a 235-amino-acid chain: Putative N-acetylmannosamine-6-phosphate 2-epimerase (235 aa).

It belongs to the NanE family.

It carries out the reaction an N-acyl-D-glucosamine 6-phosphate = an N-acyl-D-mannosamine 6-phosphate. Its pathway is amino-sugar metabolism; N-acetylneuraminate degradation; D-fructose 6-phosphate from N-acetylneuraminate: step 3/5. Its function is as follows. Converts N-acetylmannosamine-6-phosphate (ManNAc-6-P) to N-acetylglucosamine-6-phosphate (GlcNAc-6-P). The polypeptide is Putative N-acetylmannosamine-6-phosphate 2-epimerase (Aliivibrio fischeri (strain ATCC 700601 / ES114) (Vibrio fischeri)).